Reading from the N-terminus, the 181-residue chain is Nucleoside triphosphate/diphosphate phosphatase (181 aa).

R26 acts as the Proton donor in catalysis. Positions 90, 106, 108, 110, 123, and 126 each coordinate Mg(2+).

It belongs to the Ntdp family. The cofactor is Mg(2+).

The enzyme catalyses a ribonucleoside 5'-triphosphate + H2O = a ribonucleoside 5'-diphosphate + phosphate + H(+). It catalyses the reaction a ribonucleoside 5'-diphosphate + H2O = a ribonucleoside 5'-phosphate + phosphate + H(+). Its function is as follows. Has nucleoside phosphatase activity towards nucleoside triphosphates and nucleoside diphosphates. This is Nucleoside triphosphate/diphosphate phosphatase from Ligilactobacillus salivarius (strain UCC118) (Lactobacillus salivarius).